Reading from the N-terminus, the 380-residue chain is Cytochrome b (380 aa).

4 consecutive transmembrane segments (helical) span residues 34–54 (FGSL…LLAM), 78–99 (WLIR…YFHI), 114–134 (WNTG…GYVL), and 179–199 (FFAL…IHLT). Residues His84 and His98 each coordinate heme b. Positions 183 and 197 each coordinate heme b. His202 is an a ubiquinone binding site. Transmembrane regions (helical) follow at residues 227-247 (LKDI…ALFS), 289-309 (LGGV…PFLH), 321-341 (LSQL…WVGS), and 348-368 (FIII…VLFP).

The protein belongs to the cytochrome b family. In terms of assembly, the cytochrome bc1 complex contains 11 subunits: 3 respiratory subunits (MT-CYB, CYC1 and UQCRFS1), 2 core proteins (UQCRC1 and UQCRC2) and 6 low-molecular weight proteins (UQCRH/QCR6, UQCRB/QCR7, UQCRQ/QCR8, UQCR10/QCR9, UQCR11/QCR10 and a cleavage product of UQCRFS1). This cytochrome bc1 complex then forms a dimer. Requires heme b as cofactor.

Its subcellular location is the mitochondrion inner membrane. Functionally, component of the ubiquinol-cytochrome c reductase complex (complex III or cytochrome b-c1 complex) that is part of the mitochondrial respiratory chain. The b-c1 complex mediates electron transfer from ubiquinol to cytochrome c. Contributes to the generation of a proton gradient across the mitochondrial membrane that is then used for ATP synthesis. This is Cytochrome b (MT-CYB) from Halobaena caerulea (Blue petrel).